The chain runs to 328 residues: Malate dehydrogenase (328 aa).

Residue 11–17 participates in NAD(+) binding; sequence GAAGQIG. Positions 94 and 100 each coordinate substrate. NAD(+) contacts are provided by residues asparagine 107, glutamine 114, and 131 to 133; that span reads VGN. Residues asparagine 133 and arginine 164 each contribute to the substrate site. Catalysis depends on histidine 189, which acts as the Proton acceptor.

Belongs to the LDH/MDH superfamily. MDH type 2 family.

The catalysed reaction is (S)-malate + NAD(+) = oxaloacetate + NADH + H(+). Its function is as follows. Catalyzes the reversible oxidation of malate to oxaloacetate. This is Malate dehydrogenase from Xanthomonas axonopodis pv. citri (strain 306).